Consider the following 192-residue polypeptide: Transcription termination/antitermination protein NusG (192 aa).

The 29-residue stretch at 140 to 168 (VGEIVTVTDGPFETFMGTVEEIDQEKNRL) folds into the KOW domain.

It belongs to the NusG family.

Functionally, participates in transcription elongation, termination and antitermination. This chain is Transcription termination/antitermination protein NusG, found in Rickettsia conorii (strain ATCC VR-613 / Malish 7).